We begin with the raw amino-acid sequence, 586 residues long: Protein NRT1/ PTR FAMILY 5.3 (586 aa).

Helical transmembrane passes span 77–97, 100–120, 141–161, 189–209, 217–237, 334–354, 370–390, 408–428, 449–469, 492–512, and 538–558; these read WVGT…AHFG, ITFV…TLSV, ASVI…IGTG, FFNW…TVLV, WAIG…IFLL, PVLF…TLFI, IPPA…IVIY, ITLL…MIIA, AVPI…MGLA, LGTS…SILL, and NYYM…LVVI.

Belongs to the major facilitator superfamily. Proton-dependent oligopeptide transporter (POT/PTR) (TC 2.A.17) family. Expressed in roots and siliques.

The protein resides in the membrane. In terms of biological role, peptide transporter. The polypeptide is Protein NRT1/ PTR FAMILY 5.3 (NPF5.3) (Arabidopsis thaliana (Mouse-ear cress)).